The chain runs to 416 residues: Tyrosine aminotransferase (416 aa).

Lys253 is subject to N6-(pyridoxal phosphate)lysine.

The protein belongs to the class-I pyridoxal-phosphate-dependent aminotransferase family. As to quaternary structure, homodimer. Requires pyridoxal 5'-phosphate as cofactor. Post-translationally, the N-terminus is blocked.

It is found in the cytoplasm. Its subcellular location is the mitochondrion. The enzyme catalyses L-tyrosine + 2-oxoglutarate = 3-(4-hydroxyphenyl)pyruvate + L-glutamate. The protein operates within amino-acid degradation; L-phenylalanine degradation; acetoacetate and fumarate from L-phenylalanine: step 2/6. Transaminase involved in tyrosine breakdown. Converts tyrosine to p-hydroxyphenylpyruvate. This Trypanosoma cruzi protein is Tyrosine aminotransferase.